The primary structure comprises 619 residues: Probable ATP-dependent RNA helicase DDX59 (619 aa).

Lysine 26 is covalently cross-linked (Glycyl lysine isopeptide (Lys-Gly) (interchain with G-Cter in SUMO2)). Positions 57 to 98 are disordered; the sequence is SESCPFPSPGGQLAEVHSVSPEQGAKDSHPSEEPVKSFSKTQ. Phosphoserine occurs at positions 64 and 76. The segment covering 80-91 has biased composition (basic and acidic residues); it reads GAKDSHPSEEPV. The HIT-type zinc finger occupies 104–133; sequence GEPICVVCGRYGEYICDKTDEDVCSLECKA. The interval 142–161 is disordered; the sequence is KEEKSKLSNPQKADSEPESP. Phosphoserine occurs at positions 156 and 160. The short motif at 203 to 231 is the Q motif element; it reads IDFEHCSLPEVLNHNLKKSGYEVPTPIQM. Residues 234-405 form the Helicase ATP-binding domain; the sequence is IPVGLLGRDI…SQLLHNPVRI (172 aa). Residue 247–254 participates in ATP binding; that stretch reads ADTGSGKT. The DEAD box motif lies at 353–356; the sequence is DEAD. Positions 416 to 579 constitute a Helicase C-terminal domain; it reads NVRQIILWVE…ILPPQLLNSP (164 aa).

Belongs to the DEAD box helicase family. DDX59 subfamily. Interacts (via HIT-type zinc finger) with the RUVBL1/RUVBL2 complex in the presence of ADP. In terms of tissue distribution, expressed in fibroblasts (at protein level).

It localises to the cytoplasm. Its subcellular location is the nucleus. It carries out the reaction ATP + H2O = ADP + phosphate + H(+). This chain is Probable ATP-dependent RNA helicase DDX59 (DDX59), found in Homo sapiens (Human).